A 380-amino-acid chain; its full sequence is M-protease (380 aa).

The signal sequence occupies residues 1–27 (MKKPLGKIVASTALLISVAFSSSIASA). A propeptide spanning residues 28-111 (AEEAKEKYLI…IEEDAEVTTM (84 aa)) is cleaved from the precursor. The 78-residue stretch at 34 to 111 (KYLIGFNEQE…IEEDAEVTTM (78 aa)) folds into the Inhibitor I9 domain. A Ca(2+)-binding site is contributed by Gln113. Residues 116-379 (PWGISRVQAP…SGLVNAEAAT (264 aa)) enclose the Peptidase S8 domain. Asp143 serves as the catalytic Charge relay system. Asp151 serves as a coordination point for Ca(2+). His173 functions as the Charge relay system in the catalytic mechanism. Ca(2+) contacts are provided by Leu184, Asn186, Ile188, Val190, Ala274, Tyr276, Ala279, and Asp302. Ser326 acts as the Charge relay system in catalysis.

Belongs to the peptidase S8 family. In terms of assembly, monomer. Requires Ca(2+) as cofactor.

The protein localises to the secreted. Activity is inhibited by phenylmethylsulfonyl fluoride and chymostatin. Functionally, alkaline serine protease that cleaves various substrates, including N-succinyl-Ala-Ala-Pro-Phe-pNA, N-succinyl-Ala-Ala-Pro-MetpNA, oxidized insulin B chain, casein, hemoglobin and scleroproteins, such as keratin, alpha-keratin and elastin. The sequence is that of M-protease (aprE) from Shouchella clausii (strain KSM-K16) (Alkalihalobacillus clausii).